A 493-amino-acid polypeptide reads, in one-letter code: Galactose-1-phosphate uridylyltransferase (493 aa).

Belongs to the galactose-1-phosphate uridylyltransferase type 2 family.

The protein localises to the cytoplasm. It carries out the reaction alpha-D-galactose 1-phosphate + UDP-alpha-D-glucose = alpha-D-glucose 1-phosphate + UDP-alpha-D-galactose. It participates in carbohydrate metabolism; galactose metabolism. This Streptococcus pneumoniae serotype 19F (strain G54) protein is Galactose-1-phosphate uridylyltransferase.